The following is a 589-amino-acid chain: Phenylalanine--tRNA ligase beta subunit (589 aa).

The B5 domain maps to 302–377; sequence LEVREERISV…IAYGYNNIKK (76 aa). Residues D355, D361, E364, and D365 each coordinate Mg(2+).

Belongs to the phenylalanyl-tRNA synthetase beta subunit family. Type 2 subfamily. As to quaternary structure, tetramer of two alpha and two beta subunits. The cofactor is Mg(2+).

It localises to the cytoplasm. The catalysed reaction is tRNA(Phe) + L-phenylalanine + ATP = L-phenylalanyl-tRNA(Phe) + AMP + diphosphate + H(+). The protein is Phenylalanine--tRNA ligase beta subunit of Drosophila melanogaster (Fruit fly).